The chain runs to 740 residues: Ion-translocating oxidoreductase complex subunit C (740 aa).

4Fe-4S ferredoxin-type domains lie at 369–397 and 407–436; these read GEPQ…QQLY and KATT…VQYF. The [4Fe-4S] cluster site is built by Cys377, Cys380, Cys383, Cys387, Cys416, Cys419, Cys422, and Cys426. The interval 602-716 is disordered; sequence KLEQQQANAE…EPEEQVDPRK (115 aa).

This sequence belongs to the 4Fe4S bacterial-type ferredoxin family. RnfC subfamily. As to quaternary structure, the complex is composed of six subunits: RsxA, RsxB, RsxC, RsxD, RsxE and RsxG. The cofactor is [4Fe-4S] cluster.

The protein resides in the cell inner membrane. Functionally, part of a membrane-bound complex that couples electron transfer with translocation of ions across the membrane. Required to maintain the reduced state of SoxR. The protein is Ion-translocating oxidoreductase complex subunit C of Escherichia coli O139:H28 (strain E24377A / ETEC).